Here is a 282-residue protein sequence, read N- to C-terminus: Bis(5'-nucleosyl)-tetraphosphatase, symmetrical (282 aa).

Belongs to the Ap4A hydrolase family.

The enzyme catalyses P(1),P(4)-bis(5'-adenosyl) tetraphosphate + H2O = 2 ADP + 2 H(+). Its function is as follows. Hydrolyzes diadenosine 5',5'''-P1,P4-tetraphosphate to yield ADP. The protein is Bis(5'-nucleosyl)-tetraphosphatase, symmetrical of Burkholderia pseudomallei (strain 668).